The sequence spans 432 residues: UDP-N-acetylglucosamine 1-carboxyvinyltransferase (432 aa).

22–23 serves as a coordination point for phosphoenolpyruvate; the sequence is KN. Arg92 lines the UDP-N-acetyl-alpha-D-glucosamine pocket. Cys116 functions as the Proton donor in the catalytic mechanism. Position 116 is a 2-(S-cysteinyl)pyruvic acid O-phosphothioketal (Cys116). UDP-N-acetyl-alpha-D-glucosamine is bound by residues 121–125, Asp307, and Ile329; that span reads RPVDQ.

It belongs to the EPSP synthase family. MurA subfamily.

Its subcellular location is the cytoplasm. The enzyme catalyses phosphoenolpyruvate + UDP-N-acetyl-alpha-D-glucosamine = UDP-N-acetyl-3-O-(1-carboxyvinyl)-alpha-D-glucosamine + phosphate. It functions in the pathway cell wall biogenesis; peptidoglycan biosynthesis. Cell wall formation. Adds enolpyruvyl to UDP-N-acetylglucosamine. The polypeptide is UDP-N-acetylglucosamine 1-carboxyvinyltransferase (Psychrobacter sp. (strain PRwf-1)).